Consider the following 83-residue polypeptide: Small ribosomal subunit protein bS16 (83 aa).

Belongs to the bacterial ribosomal protein bS16 family.

In Azotobacter vinelandii (strain DJ / ATCC BAA-1303), this protein is Small ribosomal subunit protein bS16.